The primary structure comprises 315 residues: MSKKVMGLLVMAYGTPYKEEDLERYYTHIRHGRKPSEEMLADLRERYEAIGGISPLAAITKQQAEKLAERLNEVQDEIEFRMYLGLKHIEPFVEDAVQQMHEDGIEEAVSIVLAPHFSTFSVKSYNGRAKEEAARLGGPKLTCVESWYTEPKFIQYWADRVKETYASMSEREREKAVLIVSAHSLPEKIIAMGDPYPKQLQETADFIAKEAGVSEYVIGWQSAGNTPEPWLGPDVQDLTRQLYEEKGYEAFVYVPAGFVSDHLEVLYDNDIECKQVTDELGVSYYRPPMPNAHPQFIDALATVVLNHLRKEGESL.

Fe-coproporphyrin III contacts are provided by residues tyrosine 13, arginine 30, 46–47 (RY), serine 54, and tyrosine 125. Residues histidine 183 and glutamate 264 each coordinate Fe(2+).

It belongs to the ferrochelatase family.

Its subcellular location is the cytoplasm. It carries out the reaction Fe-coproporphyrin III + 2 H(+) = coproporphyrin III + Fe(2+). It functions in the pathway porphyrin-containing compound metabolism; protoheme biosynthesis. Functionally, involved in coproporphyrin-dependent heme b biosynthesis. Catalyzes the insertion of ferrous iron into coproporphyrin III to form Fe-coproporphyrin III. The protein is Coproporphyrin III ferrochelatase of Anoxybacillus flavithermus (strain DSM 21510 / WK1).